The sequence spans 386 residues: Succinate--CoA ligase [ADP-forming] subunit beta (386 aa).

Positions 9 to 237 constitute an ATP-grasp domain; it reads KEVLRDFGVN…LSAEHPLEVE (229 aa). Residues Lys45, 52 to 54, Val94, and Glu101 each bind ATP; that span reads GRG. Positions 192 and 206 each coordinate Mg(2+). Substrate is bound by residues Asn258 and 315 to 317; that span reads GIT.

Belongs to the succinate/malate CoA ligase beta subunit family. As to quaternary structure, heterotetramer of two alpha and two beta subunits. It depends on Mg(2+) as a cofactor.

The catalysed reaction is succinate + ATP + CoA = succinyl-CoA + ADP + phosphate. It carries out the reaction GTP + succinate + CoA = succinyl-CoA + GDP + phosphate. Its pathway is carbohydrate metabolism; tricarboxylic acid cycle; succinate from succinyl-CoA (ligase route): step 1/1. Functionally, succinyl-CoA synthetase functions in the citric acid cycle (TCA), coupling the hydrolysis of succinyl-CoA to the synthesis of either ATP or GTP and thus represents the only step of substrate-level phosphorylation in the TCA. The beta subunit provides nucleotide specificity of the enzyme and binds the substrate succinate, while the binding sites for coenzyme A and phosphate are found in the alpha subunit. This Deinococcus radiodurans (strain ATCC 13939 / DSM 20539 / JCM 16871 / CCUG 27074 / LMG 4051 / NBRC 15346 / NCIMB 9279 / VKM B-1422 / R1) protein is Succinate--CoA ligase [ADP-forming] subunit beta.